The sequence spans 220 residues: Deoxyribose-phosphate aldolase (220 aa).

The active-site Proton donor/acceptor is D89. Catalysis depends on K151, which acts as the Schiff-base intermediate with acetaldehyde. Catalysis depends on K180, which acts as the Proton donor/acceptor.

It belongs to the DeoC/FbaB aldolase family. DeoC type 1 subfamily.

It is found in the cytoplasm. The catalysed reaction is 2-deoxy-D-ribose 5-phosphate = D-glyceraldehyde 3-phosphate + acetaldehyde. It functions in the pathway carbohydrate degradation; 2-deoxy-D-ribose 1-phosphate degradation; D-glyceraldehyde 3-phosphate and acetaldehyde from 2-deoxy-alpha-D-ribose 1-phosphate: step 2/2. Catalyzes a reversible aldol reaction between acetaldehyde and D-glyceraldehyde 3-phosphate to generate 2-deoxy-D-ribose 5-phosphate. The chain is Deoxyribose-phosphate aldolase from Staphylococcus epidermidis (strain ATCC 35984 / DSM 28319 / BCRC 17069 / CCUG 31568 / BM 3577 / RP62A).